The primary structure comprises 429 residues: Histidine--tRNA ligase (429 aa).

Belongs to the class-II aminoacyl-tRNA synthetase family. In terms of assembly, homodimer.

It localises to the cytoplasm. The catalysed reaction is tRNA(His) + L-histidine + ATP = L-histidyl-tRNA(His) + AMP + diphosphate + H(+). The protein is Histidine--tRNA ligase of Streptococcus pneumoniae serotype 4 (strain ATCC BAA-334 / TIGR4).